The chain runs to 705 residues: Pentatricopeptide repeat-containing protein At1g09410, mitochondrial (705 aa).

A mitochondrion-targeting transit peptide spans methionine 1–tyrosine 11. PPR repeat units follow at residues proline 16–lysine 46, serine 47–arginine 77, asparagine 78–serine 112, tryptophan 113–lysine 139, asparagine 140–lysine 170, aspartate 171–threonine 205, tryptophan 206–lysine 232, threonine 233–alanine 267, cysteine 268–arginine 294, asparagine 295–proline 329, threonine 330–valine 364, aspartate 365–lysine 395, aspartate 396–lysine 430, asparagine 432–valine 462, and isoleucine 468–glutamate 498. Positions valine 503–glutamate 578 are type E motif. The interval asparagine 579–arginine 610 is type E(+) motif. Positions glutamate 611–tryptophan 705 are type DYW motif.

It belongs to the PPR family. PCMP-H subfamily.

It localises to the mitochondrion. The sequence is that of Pentatricopeptide repeat-containing protein At1g09410, mitochondrial (PCMP-H18) from Arabidopsis thaliana (Mouse-ear cress).